The following is a 447-amino-acid chain: MATQILLCFFLFFSVTLSSSGHPKNFSVELIHRDSPLSPIYNPQITVTDRLNAAFLRSVSRSRRFNHQLSQTDLQSGLIGADGEFFMSITIGTPPIKVFAIADTGSDLTWVQCKPCQQCYKENGPIFDKKKSSTYKSEPCDSRNCQALSSTERGCDESNNICKYRYSYGDQSFSKGDVATETVSIDSASGSPVSFPGTVFGCGYNNGGTFDETGSGIIGLGGGHLSLISQLGSSISKKFSYCLSHKSATTNGTSVINLGTNSIPSSLSKDSGVVSTPLVDKEPLTYYYLTLEAISVGKKKIPYTGSSYNPNDDGILSETSGNIIIDSGTTLTLLEAGFFDKFSSAVEESVTGAKRVSDPQGLLSHCFKSGSAEIGLPEITVHFTGADVRLSPINAFVKLSEDMVCLSMVPTTEVAIYGNFAQMDFLVGYDLETRTVSFQHMDCSANL.

The N-terminal stretch at 1–20 (MATQILLCFFLFFSVTLSSS) is a signal peptide. The N-linked (GlcNAc...) asparagine glycan is linked to Asn-25. The Peptidase A1 domain occupies 85-439 (FFMSITIGTP…DLETRTVSFQ (355 aa)). Asp-103 is an active-site residue. N-linked (GlcNAc...) asparagine glycosylation occurs at Asn-251. Asp-326 is a catalytic residue.

The protein belongs to the peptidase A1 family.

The protein resides in the secreted. In Arabidopsis thaliana (Mouse-ear cress), this protein is Probable aspartic protease At2g35615.